Consider the following 302-residue polypeptide: Bifunctional ligase/repressor BirA (302 aa).

Residues 14 to 33 constitute a DNA-binding region (H-T-H motif); sequence QPKVRSELEKFSKNLEEDIQ. The BPL/LPL catalytic domain occupies 62–236; it reads QISTALFPYS…HLYTRLNIFE (175 aa). Biotin is bound by residues 80 to 82, Gln-103, 107 to 109, and Lys-167; these read STN and RGR.

This sequence belongs to the biotin--protein ligase family.

It catalyses the reaction biotin + L-lysyl-[protein] + ATP = N(6)-biotinyl-L-lysyl-[protein] + AMP + diphosphate + H(+). Acts both as a biotin--[acetyl-CoA-carboxylase] ligase and a biotin-operon repressor. In the presence of ATP, BirA activates biotin to form the BirA-biotinyl-5'-adenylate (BirA-bio-5'-AMP or holoBirA) complex. HoloBirA can either transfer the biotinyl moiety to the biotin carboxyl carrier protein (BCCP) subunit of acetyl-CoA carboxylase, or bind to the biotin operator site and inhibit transcription of the operon. The protein is Bifunctional ligase/repressor BirA of Haemophilus influenzae (strain ATCC 51907 / DSM 11121 / KW20 / Rd).